We begin with the raw amino-acid sequence, 152 residues long: MTLTDGVLVIFIIALLGWAIYDQWGTERRHGKTLLRVPLLKRGRADSLIFTGLVAILIWQNVASHGALLTTWLLGALGLLAIYLFWIREPQIRFKREGFFFAGGWVKYNHIKAMNLSEDGVLVMQLDKRRLLIRVKNIDDLERIYHFIVNNQ.

3 helical membrane passes run 1–21 (MTLTDGVLVIFIIALLGWAIY), 45–65 (ADSLIFTGLVAILIWQNVASH), and 67–87 (ALLTTWLLGALGLLAIYLFWI).

It belongs to the UPF0266 family.

The protein resides in the cell inner membrane. The chain is UPF0266 membrane protein ESA_01432 from Cronobacter sakazakii (strain ATCC BAA-894) (Enterobacter sakazakii).